A 96-amino-acid polypeptide reads, in one-letter code: Small ribosomal subunit protein bS6 (96 aa).

The protein belongs to the bacterial ribosomal protein bS6 family.

Binds together with bS18 to 16S ribosomal RNA. In Streptococcus pneumoniae serotype 2 (strain D39 / NCTC 7466), this protein is Small ribosomal subunit protein bS6.